Consider the following 339-residue polypeptide: tRNA N6-adenosine threonylcarbamoyltransferase (339 aa).

Fe cation contacts are provided by His-112 and His-116. Substrate is bound by residues 135 to 139, Asp-168, Gly-181, and Asn-273; that span reads LVSGG. Asp-301 contributes to the Fe cation binding site.

The protein belongs to the KAE1 / TsaD family. It depends on Fe(2+) as a cofactor.

Its subcellular location is the cytoplasm. It catalyses the reaction L-threonylcarbamoyladenylate + adenosine(37) in tRNA = N(6)-L-threonylcarbamoyladenosine(37) in tRNA + AMP + H(+). In terms of biological role, required for the formation of a threonylcarbamoyl group on adenosine at position 37 (t(6)A37) in tRNAs that read codons beginning with adenine. Is involved in the transfer of the threonylcarbamoyl moiety of threonylcarbamoyl-AMP (TC-AMP) to the N6 group of A37, together with TsaE and TsaB. TsaD likely plays a direct catalytic role in this reaction. The polypeptide is tRNA N6-adenosine threonylcarbamoyltransferase (Coxiella burnetii (strain RSA 493 / Nine Mile phase I)).